Here is a 535-residue protein sequence, read N- to C-terminus: Phosphoenolpyruvate carboxykinase (ATP) (535 aa).

Substrate is bound by residues Arg59, Tyr201, and Lys207. ATP is bound by residues Lys207, His226, and 243–251; that span reads GLSGTGKTT. The Mn(2+) site is built by Lys207 and His226. Asp264 provides a ligand contact to Mn(2+). Residues Glu292, Arg328, 444–445, and Thr450 each bind ATP; that span reads RI. Arg328 serves as a coordination point for substrate.

This sequence belongs to the phosphoenolpyruvate carboxykinase (ATP) family. The cofactor is Mn(2+).

It localises to the cytoplasm. It catalyses the reaction oxaloacetate + ATP = phosphoenolpyruvate + ADP + CO2. Its pathway is carbohydrate biosynthesis; gluconeogenesis. Functionally, involved in the gluconeogenesis. Catalyzes the conversion of oxaloacetate (OAA) to phosphoenolpyruvate (PEP) through direct phosphoryl transfer between the nucleoside triphosphate and OAA. This is Phosphoenolpyruvate carboxykinase (ATP) from Porphyromonas gingivalis (strain ATCC BAA-308 / W83).